The chain runs to 493 residues: 3-octaprenyl-4-hydroxybenzoate carboxy-lyase (493 aa).

Asparagine 172 is a binding site for Mn(2+). Residues 175 to 177 (IYR), 189 to 191 (RWL), and 194 to 195 (RG) contribute to the prenylated FMN site. Glutamate 238 is a binding site for Mn(2+). Aspartate 287 functions as the Proton donor in the catalytic mechanism.

This sequence belongs to the UbiD family. As to quaternary structure, homohexamer. Prenylated FMN serves as cofactor. Mn(2+) is required as a cofactor.

It is found in the cell membrane. The catalysed reaction is a 4-hydroxy-3-(all-trans-polyprenyl)benzoate + H(+) = a 2-(all-trans-polyprenyl)phenol + CO2. The protein operates within cofactor biosynthesis; ubiquinone biosynthesis. Functionally, catalyzes the decarboxylation of 3-octaprenyl-4-hydroxy benzoate to 2-octaprenylphenol, an intermediate step in ubiquinone biosynthesis. This chain is 3-octaprenyl-4-hydroxybenzoate carboxy-lyase, found in Shewanella halifaxensis (strain HAW-EB4).